We begin with the raw amino-acid sequence, 229 residues long: Adenylate kinase (229 aa).

A propeptide spanning residues 1–9 (MLSTLAKRF) is cleaved from the precursor. Residue 25–30 (GVGKGT) coordinates ATP. The segment at 45–74 (STGDALRAEIRGQTPLGKRVKGIIESGGLV) is NMP. AMP contacts are provided by residues Thr46, Arg51, 72-74 (GLV), 100-103 (GIPR), and Gln107. The interval 141-178 (GRLFHPGSGRVYHKVTNPPKKPMTDDITGEPLIIRKDD) is LID. Arg142 is an ATP binding site. Positions 175 and 186 each coordinate AMP. Gly214 is an ATP binding site.

It belongs to the adenylate kinase family.

The protein localises to the hydrogenosome. The catalysed reaction is AMP + ATP = 2 ADP. Functionally, catalyzes the reversible transfer of the terminal phosphate group between ATP and AMP. Plays an important role in cellular energy homeostasis and in adenine nucleotide metabolism. In Trichomonas vaginalis, this protein is Adenylate kinase.